A 344-amino-acid chain; its full sequence is Anthranilate phosphoribosyltransferase (344 aa).

5-phospho-alpha-D-ribose 1-diphosphate is bound by residues Gly83, 86-87, Thr91, 93-96, 111-119, and Ser123; these read GD, NIST, and KHGGRSVSS. Gly83 provides a ligand contact to anthranilate. Position 95 (Ser95) interacts with Mg(2+). Residue Arg169 participates in anthranilate binding. The Mg(2+) site is built by Asp228 and Glu229.

This sequence belongs to the anthranilate phosphoribosyltransferase family. As to quaternary structure, homodimer. Mg(2+) is required as a cofactor.

It carries out the reaction N-(5-phospho-beta-D-ribosyl)anthranilate + diphosphate = 5-phospho-alpha-D-ribose 1-diphosphate + anthranilate. The protein operates within amino-acid biosynthesis; L-tryptophan biosynthesis; L-tryptophan from chorismate: step 2/5. In terms of biological role, catalyzes the transfer of the phosphoribosyl group of 5-phosphorylribose-1-pyrophosphate (PRPP) to anthranilate to yield N-(5'-phosphoribosyl)-anthranilate (PRA). This Methylibium petroleiphilum (strain ATCC BAA-1232 / LMG 22953 / PM1) protein is Anthranilate phosphoribosyltransferase.